Here is a 334-residue protein sequence, read N- to C-terminus: Putative violet-sensitive opsin (334 aa).

The Extracellular segment spans residues 1–29 (MGKYFYLYENISKVGPYDGPQYYLAPTWA). N-linked (GlcNAc...) asparagine glycosylation occurs at N10. Residues 30–54 (FYLQAAFMGFVFFVGTPLNFVVLLA) traverse the membrane as a helical segment. Residues 55–66 (TAKYKKLRVPLN) lie on the Cytoplasmic side of the membrane. Residues 67 to 88 (YILVNITFAGFIFVTFSVSQVF) traverse the membrane as a helical segment. The Extracellular portion of the chain corresponds to 89-106 (LASVRGYYFFGQTLCALE). Cysteines 103 and 179 form a disulfide. A helical membrane pass occupies residues 107 to 126 (AAVGAVAGLVTSWSLAVLSF). Over 127-145 (ERYLVICKPFGAFKFGSNH) the chain is Cytoplasmic. A helical transmembrane segment spans residues 146–168 (ALAAVIFTWFMGVVRCPPFFGWS). The Extracellular segment spans residues 169–194 (RYIPEGLGCSCGPDWYTNCEEFSCAS). A helical membrane pass occupies residues 195 to 222 (YSKFLLVTCFICPITIIIFSYSQLLGAL). Topologically, residues 223 to 244 (RAVAAQQAESASTQKAEKEVSR) are cytoplasmic. Residues 245–272 (MIIVMVASFVTCYGPYALTAQYYAYSQD) form a helical membrane-spanning segment. At 273–279 (ENKDYRL) the chain is on the extracellular side. Residues 280–301 (VTIPAFFSKSSCVYNPLIYAFM) form a helical membrane-spanning segment. K288 carries the post-translational modification N6-(retinylidene)lysine. At 302-334 (NKQFNGCIMEMVFGKKMEEASEVSSKTEVSTDS) the chain is on the cytoplasmic side.

Belongs to the G-protein coupled receptor 1 family. Opsin subfamily. Post-translationally, phosphorylated on some or all of the serine and threonine residues present in the C-terminal region. The three color pigments are found in the cone photoreceptor cells.

The protein localises to the membrane. Functionally, visual pigments are the light-absorbing molecules that mediate vision. They consist of an apoprotein, opsin, covalently linked to cis-retinal. The polypeptide is Putative violet-sensitive opsin (Oryzias latipes (Japanese rice fish)).